A 234-amino-acid chain; its full sequence is Leucyl/phenylalanyl-tRNA--protein transferase (234 aa).

The protein belongs to the L/F-transferase family.

It is found in the cytoplasm. It carries out the reaction N-terminal L-lysyl-[protein] + L-leucyl-tRNA(Leu) = N-terminal L-leucyl-L-lysyl-[protein] + tRNA(Leu) + H(+). It catalyses the reaction N-terminal L-arginyl-[protein] + L-leucyl-tRNA(Leu) = N-terminal L-leucyl-L-arginyl-[protein] + tRNA(Leu) + H(+). The catalysed reaction is L-phenylalanyl-tRNA(Phe) + an N-terminal L-alpha-aminoacyl-[protein] = an N-terminal L-phenylalanyl-L-alpha-aminoacyl-[protein] + tRNA(Phe). Functionally, functions in the N-end rule pathway of protein degradation where it conjugates Leu, Phe and, less efficiently, Met from aminoacyl-tRNAs to the N-termini of proteins containing an N-terminal arginine or lysine. The sequence is that of Leucyl/phenylalanyl-tRNA--protein transferase from Dechloromonas aromatica (strain RCB).